A 353-amino-acid polypeptide reads, in one-letter code: Thiamine-phosphate synthase (353 aa).

A unknown region spans residues 1-128 (MELMVVEADA…ASTAAEIRYG (128 aa)). The interval 129 to 353 (LYDLEVRILE…ASRTLLQTLA (225 aa)) is thiamine-phosphate synthase. 4-amino-2-methyl-5-(diphosphooxymethyl)pyrimidine is bound by residues 185–189 (QYRRK) and Asn217. Residues Asp218 and Asp237 each coordinate Mg(2+). Ser256 contacts 4-amino-2-methyl-5-(diphosphooxymethyl)pyrimidine. 282 to 284 (TKT) is a binding site for 2-[(2R,5Z)-2-carboxy-4-methylthiazol-5(2H)-ylidene]ethyl phosphate. Lys285 lines the 4-amino-2-methyl-5-(diphosphooxymethyl)pyrimidine pocket. Gly312 lines the 2-[(2R,5Z)-2-carboxy-4-methylthiazol-5(2H)-ylidene]ethyl phosphate pocket.

It belongs to the thiamine-phosphate synthase family. Mg(2+) is required as a cofactor.

The catalysed reaction is 2-[(2R,5Z)-2-carboxy-4-methylthiazol-5(2H)-ylidene]ethyl phosphate + 4-amino-2-methyl-5-(diphosphooxymethyl)pyrimidine + 2 H(+) = thiamine phosphate + CO2 + diphosphate. It catalyses the reaction 2-(2-carboxy-4-methylthiazol-5-yl)ethyl phosphate + 4-amino-2-methyl-5-(diphosphooxymethyl)pyrimidine + 2 H(+) = thiamine phosphate + CO2 + diphosphate. It carries out the reaction 4-methyl-5-(2-phosphooxyethyl)-thiazole + 4-amino-2-methyl-5-(diphosphooxymethyl)pyrimidine + H(+) = thiamine phosphate + diphosphate. Its pathway is cofactor biosynthesis; thiamine diphosphate biosynthesis; thiamine phosphate from 4-amino-2-methyl-5-diphosphomethylpyrimidine and 4-methyl-5-(2-phosphoethyl)-thiazole: step 1/1. Functionally, condenses 4-methyl-5-(beta-hydroxyethyl)thiazole monophosphate (THZ-P) and 2-methyl-4-amino-5-hydroxymethyl pyrimidine pyrophosphate (HMP-PP) to form thiamine monophosphate (TMP). This chain is Thiamine-phosphate synthase, found in Synechococcus sp. (strain CC9311).